Reading from the N-terminus, the 335-residue chain is Pyridoxal 5'-phosphate synthase subunit PdxS (335 aa).

D30 serves as a coordination point for D-ribose 5-phosphate. K87 (schiff-base intermediate with D-ribose 5-phosphate) is an active-site residue. G159 contributes to the D-ribose 5-phosphate binding site. R171 contributes to the D-glyceraldehyde 3-phosphate binding site. D-ribose 5-phosphate contacts are provided by residues G257 and 278-279 (GS).

This sequence belongs to the PdxS/SNZ family. In the presence of PdxT, forms a dodecamer of heterodimers.

It carries out the reaction aldehydo-D-ribose 5-phosphate + D-glyceraldehyde 3-phosphate + L-glutamine = pyridoxal 5'-phosphate + L-glutamate + phosphate + 3 H2O + H(+). It participates in cofactor biosynthesis; pyridoxal 5'-phosphate biosynthesis. Its function is as follows. Catalyzes the formation of pyridoxal 5'-phosphate from ribose 5-phosphate (RBP), glyceraldehyde 3-phosphate (G3P) and ammonia. The ammonia is provided by the PdxT subunit. Can also use ribulose 5-phosphate and dihydroxyacetone phosphate as substrates, resulting from enzyme-catalyzed isomerization of RBP and G3P, respectively. This Thermococcus gammatolerans (strain DSM 15229 / JCM 11827 / EJ3) protein is Pyridoxal 5'-phosphate synthase subunit PdxS.